The following is a 918-amino-acid chain: Glutamate receptor ionotropic, kainate 1 (918 aa).

The signal sequence occupies residues 1–30; the sequence is MELGTLLAQPGLWTRDTSWALLYFLCYILP. At 31 to 576 the chain is on the extracellular side; that stretch reads QTAPQVLRIG…VFSFLNPLSP (546 aa). Asn-68, Asn-74, Asn-276, Asn-379, Asn-428, Asn-439, and Asn-446 each carry an N-linked (GlcNAc...) asparagine glycan. L-glutamate is bound by residues Pro-531, Thr-533, and Arg-538. Residue Asn-561 is glycosylated (N-linked (GlcNAc...) asparagine). Residues 577-597 traverse the membrane as a helical segment; the sequence is DIWMYVLLACLGVSCVLFVIA. Over 598–653 the chain is Cytoplasmic; the sequence is RFTPYEWYNPHPCNPDSDVVENNFTLLNSFWFGVGALMQQGSELMPKALSTRIVGG. Residues 654-674 traverse the membrane as a helical segment; sequence IWWFFTLIIISSYTANLAAFL. The Extracellular portion of the chain corresponds to 675-834; the sequence is TVERMESPID…KEASALGVEN (160 aa). L-glutamate-binding residues include Ser-704 and Thr-705. Ser-725 is modified (phosphoserine; by PKC). Glu-753 contacts L-glutamate. Thr-761 bears the Phosphothreonine; by PKC mark. Cysteines 765 and 819 form a disulfide. Asn-766 carries N-linked (GlcNAc...) asparagine glycosylation. A helical transmembrane segment spans residues 835 to 855; that stretch reads IGGIFIVLAAGLVLSVFVAIG. The Cytoplasmic portion of the chain corresponds to 856 to 918; the sequence is EFIYKSRKNN…IRKQSSVHTV (63 aa).

The protein belongs to the glutamate-gated ion channel (TC 1.A.10.1) family. GRIK1 subfamily. In terms of assembly, homotetramer or heterotetramer of pore-forming glutamate receptor subunits. Tetramers may be formed by the dimerization of dimers. Can form functional heteromeric receptors with GRIK4 and GRIK5. Interacts with KLHL17.

The protein resides in the cell membrane. It localises to the postsynaptic cell membrane. The catalysed reaction is Ca(2+)(in) = Ca(2+)(out). Its function is as follows. Ionotropic glutamate receptor that functions as a cation-permeable ligand-gated ion channel, gated by L-glutamate and the glutamatergic agonist kainic acid. L-glutamate acts as an excitatory neurotransmitter at many synapses in the central nervous system. Binding of the excitatory neurotransmitter L-glutamate induces a conformation change, leading to the opening of the cation channel, and thereby converts the chemical signal to an electrical impulse. The receptor then desensitizes rapidly and enters a transient inactive state, characterized by the presence of bound agonist. This chain is Glutamate receptor ionotropic, kainate 1 (GRIK1), found in Macaca fascicularis (Crab-eating macaque).